The sequence spans 315 residues: HVA22-like protein h (315 aa).

The tract at residues 148–315 (PKPKPKEKKQ…RKARSAGAPR (168 aa)) is disordered. The span at 173-190 (ATSQAASSNPQVRLQSKK) shows a compositional bias: polar residues. Residues 234 to 248 (PPGPPPPPPPPPPSP) are compositionally biased toward pro residues.

The protein belongs to the DP1 family.

The polypeptide is HVA22-like protein h (HVA22H) (Arabidopsis thaliana (Mouse-ear cress)).